A 224-amino-acid polypeptide reads, in one-letter code: Holliday junction branch migration complex subunit RuvA (224 aa).

A domain I region spans residues 1-64 (MIGKVAGILD…EDLLQLFGFP (64 aa)). Residues 65 to 143 (TMIEKEWHRL…ALMAMGGGTA (79 aa)) are domain II. Positions 141–185 (GTAALAPSEPPEPEPGTSSGSRRKTRAPEPPRPSHTADALSALAN) are disordered. The flexible linker stretch occupies residues 144–170 (ALAPSEPPEPEPGTSSGSRRKTRAPEP). The tract at residues 171-224 (PRPSHTADALSALANLGYQPTDAAQAVAQAAGESPDADTAALIRAALKLLAPKS) is domain III.

This sequence belongs to the RuvA family. In terms of assembly, homotetramer. Forms an RuvA(8)-RuvB(12)-Holliday junction (HJ) complex. HJ DNA is sandwiched between 2 RuvA tetramers; dsDNA enters through RuvA and exits via RuvB. An RuvB hexamer assembles on each DNA strand where it exits the tetramer. Each RuvB hexamer is contacted by two RuvA subunits (via domain III) on 2 adjacent RuvB subunits; this complex drives branch migration. In the full resolvosome a probable DNA-RuvA(4)-RuvB(12)-RuvC(2) complex forms which resolves the HJ.

It localises to the cytoplasm. Functionally, the RuvA-RuvB-RuvC complex processes Holliday junction (HJ) DNA during genetic recombination and DNA repair, while the RuvA-RuvB complex plays an important role in the rescue of blocked DNA replication forks via replication fork reversal (RFR). RuvA specifically binds to HJ cruciform DNA, conferring on it an open structure. The RuvB hexamer acts as an ATP-dependent pump, pulling dsDNA into and through the RuvAB complex. HJ branch migration allows RuvC to scan DNA until it finds its consensus sequence, where it cleaves and resolves the cruciform DNA. The sequence is that of Holliday junction branch migration complex subunit RuvA from Cereibacter sphaeroides (strain ATCC 17029 / ATH 2.4.9) (Rhodobacter sphaeroides).